Consider the following 55-residue polypeptide: Large ribosomal subunit protein bL33 (55 aa).

Belongs to the bacterial ribosomal protein bL33 family.

This Rhizobium etli (strain CIAT 652) protein is Large ribosomal subunit protein bL33.